The primary structure comprises 215 residues: Putative ribosome biogenesis protein slx9-like (215 aa).

Disordered regions lie at residues Ile49–Met121, Asp133–Lys157, and Leu189–Lys215.

The protein belongs to the SLX9 family.

It is found in the nucleus. The protein localises to the nucleolus. Functionally, involved in ribosome biogenesis. In Dictyostelium discoideum (Social amoeba), this protein is Putative ribosome biogenesis protein slx9-like.